Reading from the N-terminus, the 230-residue chain is Sugar fermentation stimulation protein homolog (230 aa).

Belongs to the SfsA family.

The polypeptide is Sugar fermentation stimulation protein homolog (Thermoanaerobacter pseudethanolicus (strain ATCC 33223 / 39E) (Clostridium thermohydrosulfuricum)).